Here is a 453-residue protein sequence, read N- to C-terminus: Carbamoyl phosphate synthase arginine-specific small chain (453 aa).

A mitochondrion-targeting transit peptide spans 1–28; that stretch reads MFARVFKAMPARASALTSVNASIPARFM. Residues 219–406 enclose the Glutamine amidotransferase type-1 domain; it reads HVAVIDCGVK…IDSVKKYKAS (188 aa). Cys-295 acts as the Nucleophile in catalysis. Active-site residues include His-379 and Glu-381.

It belongs to the CarA family. As to quaternary structure, heterodimer composed of 2 chains; the small (or glutamine) chain promotes the hydrolysis of glutamine to ammonia, which is used by the large (or ammonia) chain to synthesize carbamoyl phosphate.

It is found in the mitochondrion matrix. The enzyme catalyses hydrogencarbonate + L-glutamine + 2 ATP + H2O = carbamoyl phosphate + L-glutamate + 2 ADP + phosphate + 2 H(+). The catalysed reaction is L-glutamine + H2O = L-glutamate + NH4(+). Its pathway is amino-acid biosynthesis; L-arginine biosynthesis; carbamoyl phosphate from bicarbonate: step 1/1. Small subunit of the arginine-specific carbamoyl phosphate synthase (CPSase). CPSase catalyzes the formation of carbamoyl phosphate from the ammonia moiety of glutamine, carbonate, and phosphate donated by ATP, the first step of the arginine biosynthetic pathway. The small subunit (glutamine amidotransferase) binds and cleaves glutamine to supply the large subunit with the substrate ammonia. The polypeptide is Carbamoyl phosphate synthase arginine-specific small chain (cpa1) (Aspergillus fumigatus (strain ATCC MYA-4609 / CBS 101355 / FGSC A1100 / Af293) (Neosartorya fumigata)).